Here is a 434-residue protein sequence, read N- to C-terminus: Trigger factor (434 aa).

One can recognise a PPIase FKBP-type domain in the interval 160 to 245 (GDKVKMNFVG…LTEVLAANLP (86 aa)).

Belongs to the FKBP-type PPIase family. Tig subfamily.

It is found in the cytoplasm. The catalysed reaction is [protein]-peptidylproline (omega=180) = [protein]-peptidylproline (omega=0). Its function is as follows. Involved in protein export. Acts as a chaperone by maintaining the newly synthesized protein in an open conformation. Functions as a peptidyl-prolyl cis-trans isomerase. This Shewanella sp. (strain MR-4) protein is Trigger factor.